The chain runs to 306 residues: Tyrosine recombinase EUBREC_2677 (306 aa).

The Core-binding (CB) domain occupies 2–84 (NNLQTHISSY…SIKAFFHYLE (83 aa)). Residues 106–296 (ILPKTIPLYI…AVSKQKDILI (191 aa)) form the Tyr recombinase domain. Catalysis depends on residues R155, K179, H248, R251, and H274. The active-site O-(3'-phospho-DNA)-tyrosine intermediate is Y283.

The protein belongs to the 'phage' integrase family.

The protein resides in the cytoplasm. Functionally, site-specific tyrosine recombinase, which acts by catalyzing the cutting and rejoining of the recombining DNA molecules. This chain is Tyrosine recombinase EUBREC_2677, found in Agathobacter rectalis (strain ATCC 33656 / DSM 3377 / JCM 17463 / KCTC 5835 / VPI 0990) (Eubacterium rectale).